A 132-amino-acid polypeptide reads, in one-letter code: Proline-rich protein sgp2 (132 aa).

An N-terminal signal peptide occupies residues 1–20; the sequence is MKYCFVFFVTLICLIANCSA. 2 disordered regions span residues 23 to 62 and 87 to 132; these read EGDK…SNSR and GASV…LGLP. The segment covering 36-47 has biased composition (basic and acidic residues); that stretch reads KQIERASDKTSE. The segment covering 51–62 has biased composition (polar residues); sequence GNTNAQGDSNSR. The span at 91–105 shows a compositional bias: low complexity; it reads PQLPDLPTTPSLPDM.

It localises to the secreted. This is Proline-rich protein sgp2 (sgp2) from Glossina morsitans morsitans (Savannah tsetse fly).